A 262-amino-acid polypeptide reads, in one-letter code: WUSCHEL-related homeobox 11 (262 aa).

Residues 1 to 11 (MDGGHSPDRHA) are compositionally biased toward basic and acidic residues. 2 disordered regions span residues 1 to 21 (MDGGHSPDRHAAAAAGEPVRS) and 79 to 115 (RRRQRQLQAQAQAAAAAASSGSPPTASSGGLAPGHAG). The homeobox DNA-binding region spans 18–82 (PVRSRWTPKP…NRRSRSRRRQ (65 aa)). Over residues 84 to 112 (QLQAQAQAAAAAASSGSPPTASSGGLAPG) the composition is skewed to low complexity.

The protein belongs to the WUS homeobox family. As to quaternary structure, interacts with ERF3.

Its subcellular location is the nucleus. In terms of biological role, transcription factor which may be involved in developmental processes. Promotes the development of crown roots (both initiation and elongation), main components of the fibrous root system, by regulating the expression of genes required for crown root development and hormone-responsive genes involved in cytokinin (e.g. RR1, RR2, RR3 and RR4) and auxin (e.g. IAA5, IAA11, IAA23 and IAA31) signaling. The polypeptide is WUSCHEL-related homeobox 11 (Oryza sativa subsp. indica (Rice)).